The primary structure comprises 923 residues: MLWRGSQALRHFSTSRVYFKNKLKLALIGQSLFGQEVYSQLLKEGHRVVGVFTVPDKDGKADPLALAAEKDGTPVFKFPRWRLKGKTIKEVAEAYQSVGAELNVLPFCTQFIPMDVIDSPKHGSIIYHPSLLPRHRGASAINWTLIMGDKKAGFSVFWADDGLDTGPILLQRSCDVKPNDTVDSLYNRFLFPEGIKAMVEAVQLIADGKAPRTPQPEEGATYEGIQKKENAEVSWDQPAEGLHNWIRGHDKVPGAWAEINGQMVTFYGSSLLTSSVPSGEPLDIRGAKKPGLVTKNGLVLFGNDGKALMVRNLQFEDGKMIPASQYFSAGETSVVELTAEELKVAETIKVIWARILSNTPVIEDSTDFFKSGASSMDVVRLVEEIRQSCGGLQLQNEDVYMATKFGDFIQKVVRRLRGEDEEAEMVVDYVSKEVNGMTVKIPYQCFINGQFVDAEDGETYATVNPTDGTTICRVSYASLADVDRAVAAAKDAFENGEWGRMNARDRGRLMYRLADLMEENQEELATIEALDSGAVYTLALKTHIGMSVQTFRYFAGWCDKIQGSTIPINQARPNYNLTFTKKEPLGACAIIIPWNYPLMMLAWKSAACLAAGNTLVLKPAQVTPLTALKFAELTVKAGFPKGVINIIPGSGGVAGQRLSQHPDIRKLGFTGSTSVGKQIMKSCAVSNLKKVSLELGGKSPLIIFSDCDLEKAVRMGMGAVFFNKGENCIAAGRLFVEEAIHDEFVTRVVEEIKKMKIGDPLDRSTDHGPQNHRAHLEKLLQYCETGVQEGATLVYGGRQVQRPGFFMEPTVFTGVEDHMYLAKEESFGPIMVISKFQNGDIDGVLQRANNTEYGLASGVFTRDINKAMYVSDKLEAGTVFINTYNKTDVAAPFGGMKQSGFGKDLGEEALNEYLKIKTVTLEY.

Residues 1–19 constitute a mitochondrion; not cleaved transit peptide; sequence MLWRGSQALRHFSTSRVYF. The segment at 23–331 is hydrolase domain; it reads LKLALIGQSL…PASQYFSAGE (309 aa). Phosphoserine is present on Ser-31. Lys-60 bears the N6-succinyllysine mark. 110–112 serves as a coordination point for (6R)-10-formyltetrahydrofolate; that stretch reads QFI. His-128 functions as the Proton donor in the catalytic mechanism. Position 164 (Asp-164) interacts with (6R)-10-formyltetrahydrofolate. The 78-residue stretch at 339–416 folds into the Carrier domain; that stretch reads AEELKVAETI…DFIQKVVRRL (78 aa). Ser-375 is subject to O-(pantetheine 4'-phosphoryl)serine. The aldehyde dehydrogenase domain stretch occupies residues 438-923; that stretch reads TVKIPYQCFI…LKIKTVTLEY (486 aa). NADP(+) contacts are provided by residues 592 to 594 and 618 to 621; these read IPW and KPAQ. At Ser-650 the chain carries Phosphoserine. NADP(+)-binding positions include 651–656 and 671–672; these read GGVAGQ and GS. Lys-681 is modified (N6-succinyllysine). Glu-694 (proton acceptor) is an active-site residue. 694-695 contacts NADP(+); sequence EL. Cys-728 functions as the Proton donor in the catalytic mechanism. Residues Lys-778 and 825–827 contribute to the NADP(+) site; that span reads ESF. Lys-903 carries the post-translational modification N6-acetyllysine.

In the N-terminal section; belongs to the GART family. It in the C-terminal section; belongs to the aldehyde dehydrogenase family. ALDH1L subfamily. Post-translationally, phosphopantetheinylation at Ser-375 by AASDHPPT is required for the formyltetrahydrofolate dehydrogenase activity.

The protein localises to the mitochondrion. It catalyses the reaction (6R)-10-formyltetrahydrofolate + NADP(+) + H2O = (6S)-5,6,7,8-tetrahydrofolate + CO2 + NADPH + H(+). Mitochondrial 10-formyltetrahydrofolate dehydrogenase that catalyzes the NADP(+)-dependent conversion of 10-formyltetrahydrofolate to tetrahydrofolate and carbon dioxide. The sequence is that of Mitochondrial 10-formyltetrahydrofolate dehydrogenase from Mus musculus (Mouse).